A 162-amino-acid chain; its full sequence is Ribosome maturation factor RimP (162 aa).

It belongs to the RimP family.

The protein localises to the cytoplasm. Functionally, required for maturation of 30S ribosomal subunits. This Cupriavidus necator (strain ATCC 17699 / DSM 428 / KCTC 22496 / NCIMB 10442 / H16 / Stanier 337) (Ralstonia eutropha) protein is Ribosome maturation factor RimP.